We begin with the raw amino-acid sequence, 208 residues long: Thymidylate kinase (208 aa).

ATP is bound at residue 10–17 (GPDGSGKT).

The protein belongs to the thymidylate kinase family.

The enzyme catalyses dTMP + ATP = dTDP + ADP. Its function is as follows. Phosphorylation of dTMP to form dTDP in both de novo and salvage pathways of dTTP synthesis. This chain is Thymidylate kinase, found in Listeria monocytogenes serotype 4a (strain HCC23).